The sequence spans 185 residues: NADH-dependent FMN reductase AsuE2 (185 aa).

A compositionally biased stretch (low complexity) spans 1–13 (MSTHTARRAGATA). Positions 1 to 24 (MSTHTARRAGATAGHDRDRGTEPG) are disordered. The segment covering 14–24 (GHDRDRGTEPG) has biased composition (basic and acidic residues).

This sequence belongs to the non-flavoprotein flavin reductase family. Does not interact with AsuE1, suggesting a possible transient interaction between the two enzymes instead of formation of a stable complex.

The enzyme catalyses FMNH2 + NAD(+) = FMN + NADH + 2 H(+). It functions in the pathway antibiotic biosynthesis. Involved in the biosynthesis of the antibiotic asukamycin. When flavin concentration is low, AsuE2 assists the protoasukamycin 4-monooxygenase AsuE1 by providing a reduced form of flavin, enhancing AsuE1 activity. This chain is NADH-dependent FMN reductase AsuE2, found in Streptomyces nodosus subsp. asukaensis.